The primary structure comprises 352 residues: Chorismate synthase (352 aa).

Arg-48 contributes to the NADP(+) binding site. Residues 125–127 (RSS), 238–239 (NA), Gly-278, 293–297 (KPTSS), and Arg-319 contribute to the FMN site.

Belongs to the chorismate synthase family. Homotetramer. The cofactor is FMNH2.

The catalysed reaction is 5-O-(1-carboxyvinyl)-3-phosphoshikimate = chorismate + phosphate. It participates in metabolic intermediate biosynthesis; chorismate biosynthesis; chorismate from D-erythrose 4-phosphate and phosphoenolpyruvate: step 7/7. In terms of biological role, catalyzes the anti-1,4-elimination of the C-3 phosphate and the C-6 proR hydrogen from 5-enolpyruvylshikimate-3-phosphate (EPSP) to yield chorismate, which is the branch point compound that serves as the starting substrate for the three terminal pathways of aromatic amino acid biosynthesis. This reaction introduces a second double bond into the aromatic ring system. This Legionella pneumophila (strain Paris) protein is Chorismate synthase.